Reading from the N-terminus, the 2631-residue chain is Cyclic GMP-binding protein C (2631 aa).

LRR repeat units follow at residues 170 to 194, 196 to 217, 218 to 240, 242 to 262, 263 to 285, and 287 to 308; these read TAQIDIEFHLSYTQLVTLPPSIFSL, WIQKLVLTHHNIKTLSEDIGKL, QQLQVLVLENNRLINLPQSIGDL, NLKRLEVDNNHLVSLCSLERL, SKLEVLSVNNNKLTLLPTSIASL, and SLKTLNIKSNPIITPPSTVVSK. The region spanning 323–515 is the Roc domain; that stretch reads GARPCLRSKL…QLIEDIIKTQ (193 aa). Residues 336-343, 402-406, and 458-461 each bind GTP; these read GDPGVGKT, DIANQ, and THID. One can recognise a COR domain in the interval 523-741; that stretch reads PSSFFTLEEA…ESCQKRAVIL (219 aa). Residues 878 to 1172 form the Protein kinase domain; it reads VKINKEVGRG…KKKFAPLPFT (295 aa). ATP contacts are provided by residues 884 to 892 and Lys905; that span reads VGRGAFGIV. Asp1023 functions as the Proton acceptor in the catalytic mechanism. The span at 1225–1250 shows a compositional bias: polar residues; the sequence is ISLTSSGTSPTNSPVGGLLSQSLTQP. Disordered regions lie at residues 1225–1263 and 1387–1418; these read ISLTSSGTSPTNSPVGGLLSQSLTQPITSGGSTSGILST and SSATLKSEHISTRRRSDTAGKNGVPPHWRNSV. Residues 1251–1263 show a composition bias toward low complexity; it reads ITSGGSTSGILST. Residues 1366–1539 form the N-terminal Ras-GEF domain; it reads SVSIIIAATM…QIYGTLTTHE (174 aa). Positions 1392–1404 are enriched in basic and acidic residues; sequence KSEHISTRRRSDT. One can recognise a DEP domain in the interval 1620 to 1706; it reads PLLGITVKEK…SPTSFYMFLE (87 aa). The Ras-GEF domain maps to 1708-1971; it reads DPELIARQYT…DLKALDSLQI (264 aa). A disordered region spans residues 1989–2013; the sequence is GTTNDDKEKGDENGGGLTSSNFFGN. 2014–2133 contacts a nucleoside 3',5'-cyclic phosphate; it reads GSDELTERDW…AKFYKIMANQ (120 aa). Disordered stretches follow at residues 2142 to 2180, 2192 to 2239, and 2263 to 2346; these read PWSKPKNTTGGSSSSNQSAGPDNILGTTPTGISSSGGGL, MSLS…TTTD, and SANL…GQQP. A compositionally biased stretch (low complexity) spans 2144–2174; it reads SKPKNTTGGSSSSNQSAGPDNILGTTPTGIS. The span at 2212–2221 shows a compositional bias: pro residues; that stretch reads LPSPPAPLQS. Positions 2222 to 2238 are enriched in low complexity; sequence PPTSGISSPTTTTSTTT. A compositionally biased stretch (basic and acidic residues) spans 2287-2299; that stretch reads TINKDPHQRDSGS. The segment covering 2321 to 2336 has biased composition (polar residues); that stretch reads GSISYLGRTQTSTSPL. The region spanning 2354 to 2414 is the GRAM domain; sequence EFCQRFALVD…KNIDKLICIN (61 aa). Residue 2490–2616 coordinates a nucleoside 3',5'-cyclic phosphate; that stretch reads GDELTKEDWE…ASKWFKYLAT (127 aa).

It belongs to the protein kinase superfamily. TKL Ser/Thr protein kinase family. ROCO subfamily.

It carries out the reaction L-seryl-[protein] + ATP = O-phospho-L-seryl-[protein] + ADP + H(+). It catalyses the reaction L-threonyl-[protein] + ATP = O-phospho-L-threonyl-[protein] + ADP + H(+). Its function is as follows. Promotes the exchange of Ras-bound GDP by GTP. Required for cyclic GMP-mediated chemotaxis, polarity. Plays a key role in cyclic AMP-induced myosin II translocation to the cortex. Also involved in the phosphorylation of mlkA and mlcR, either directly or via an intermediate kinase. In Dictyostelium discoideum (Social amoeba), this protein is Cyclic GMP-binding protein C (gbpC).